Here is a 606-residue protein sequence, read N- to C-terminus: NADH-ubiquinone oxidoreductase chain 5 (606 aa).

The next 16 membrane-spanning stretches (helical) occupy residues 1-21 (MNLFTPLMLTAMFILLLPIIM), 43-63 (AFIISMIPTMMFISSGQEAII), 88-108 (IFIPVALFVTWSIMEFSMWYM), 117-137 (FFKYLLMFLITMMILVTANNL), 140-160 (LFIGWEGVGIMSFLLIGWWYG), 171-191 (AILYNRIGDVGFIMAMAWFLT), 209-229 (LNIPLLGLLLAATGKSAQFGL), 241-261 (TPVSALLHSSTMVVAGVFLLI), 273-293 (MQTLTLCLGAITTLFTAICAL), 310-330 (LGLMIVTIGINQPYLAFLHIC), 366-386 (MPFTTTSLIIGSLALTGMPFL), 413-433 (LIATSLTAAYSTRIMFFVLLG), 457-477 (LLIGSIFAGYLISYNIPPTTI), 488-508 (LTALAVTIAGFILALELNLAA), 513-533 (FMYPSNLFKFSNLLGYFPIVM), and 582-602 (GLVKLYFLSFMITLALSLILL).

The protein belongs to the complex I subunit 5 family. As to quaternary structure, core subunit of respiratory chain NADH dehydrogenase (Complex I) which is composed of 45 different subunits.

It localises to the mitochondrion inner membrane. The catalysed reaction is a ubiquinone + NADH + 5 H(+)(in) = a ubiquinol + NAD(+) + 4 H(+)(out). In terms of biological role, core subunit of the mitochondrial membrane respiratory chain NADH dehydrogenase (Complex I) which catalyzes electron transfer from NADH through the respiratory chain, using ubiquinone as an electron acceptor. Essential for the catalytic activity and assembly of complex I. The sequence is that of NADH-ubiquinone oxidoreductase chain 5 (MT-ND5) from Felis catus (Cat).